The primary structure comprises 1515 residues: Glutamate synthase [NADPH] large chain (1515 aa).

A propeptide spanning residues 1–36 (MTTELNQGEQFVADFRANAAALTTANAYNPEDEHDA) is cleaved from the precursor. The active-site For GATase activity is cysteine 37. The 396-residue stretch at 37–432 (CGVGFIAAID…PGEMIAVDLQ (396 aa)) folds into the Glutamine amidotransferase type-2 domain. Residues 916 to 937 (AKSDSGEGGEDPARFRPDKNGD) are disordered. Residues 926–936 (DPARFRPDKNG) show a composition bias toward basic and acidic residues. Residues 1085-1142 (LSEV…IMVR) and 1086-1142 (SEVH…IMVR) each bind FMN. Positions 1138, 1144, and 1149 each coordinate [3Fe-4S] cluster.

It belongs to the glutamate synthase family. As to quaternary structure, aggregate of 4 catalytic active heterodimers, consisting of a large and a small subunit. Requires [3Fe-4S] cluster as cofactor. FAD serves as cofactor. The cofactor is FMN.

It catalyses the reaction 2 L-glutamate + NADP(+) = L-glutamine + 2-oxoglutarate + NADPH + H(+). It participates in amino-acid biosynthesis; L-glutamate biosynthesis via GLT pathway; L-glutamate from 2-oxoglutarate and L-glutamine (NADP(+) route): step 1/1. The protein operates within energy metabolism; nitrogen metabolism. The chain is Glutamate synthase [NADPH] large chain (gltB) from Azospirillum brasilense.